The chain runs to 116 residues: Proline-rich protein 9 (116 aa).

The polypeptide is Proline-rich protein 9 (Prr9) (Mus musculus (Mouse)).